The following is a 520-amino-acid chain: 3-phosphoshikimate 1-carboxyvinyltransferase, chloroplastic (520 aa).

The N-terminal 76 residues, 1 to 76, are a transit peptide targeting the chloroplast; it reads MAQVSRICNG…KVMSSVSTAE (76 aa). The disordered stretch occupies residues 20–39; sequence LSKSSQRKSPLSVSLKTQQH. The 3-phosphoshikimate site is built by Lys99, Ser100, and Arg104. Lys99 contacts phosphoenolpyruvate. Positions 177 and 207 each coordinate phosphoenolpyruvate. Residues Ser254, Ser255, Gln256, Ser282, Asp407, and Lys434 each coordinate 3-phosphoshikimate. Gln256 contacts phosphoenolpyruvate. Asp407 functions as the Proton acceptor in the catalytic mechanism. Phosphoenolpyruvate contacts are provided by Arg438, Arg480, and Lys505.

This sequence belongs to the EPSP synthase family.

The protein resides in the plastid. The protein localises to the chloroplast. It catalyses the reaction 3-phosphoshikimate + phosphoenolpyruvate = 5-O-(1-carboxyvinyl)-3-phosphoshikimate + phosphate. Its pathway is metabolic intermediate biosynthesis; chorismate biosynthesis; chorismate from D-erythrose 4-phosphate and phosphoenolpyruvate: step 6/7. Its function is as follows. Catalyzes the transfer of the enolpyruvyl moiety of phosphoenolpyruvate (PEP) to the 5-hydroxyl of shikimate-3-phosphate (S3P) to produce enolpyruvyl shikimate-3-phosphate and inorganic phosphate. In Arabidopsis thaliana (Mouse-ear cress), this protein is 3-phosphoshikimate 1-carboxyvinyltransferase, chloroplastic.